Consider the following 210-residue polypeptide: dTTP/UTP pyrophosphatase (210 aa).

Asp-80 acts as the Proton acceptor in catalysis.

Belongs to the Maf family. YhdE subfamily. Requires a divalent metal cation as cofactor.

Its subcellular location is the cytoplasm. It catalyses the reaction dTTP + H2O = dTMP + diphosphate + H(+). It carries out the reaction UTP + H2O = UMP + diphosphate + H(+). Its function is as follows. Nucleoside triphosphate pyrophosphatase that hydrolyzes dTTP and UTP. May have a dual role in cell division arrest and in preventing the incorporation of modified nucleotides into cellular nucleic acids. This is dTTP/UTP pyrophosphatase from Nitratidesulfovibrio vulgaris (strain ATCC 29579 / DSM 644 / CCUG 34227 / NCIMB 8303 / VKM B-1760 / Hildenborough) (Desulfovibrio vulgaris).